The following is a 270-amino-acid chain: Monofunctional glycosyltransferase (270 aa).

The disordered stretch occupies residues 1–35; it reads MKRSDRYKTYNKPNDSNDSNQLHHNTYFKPVNKPQ. The segment covering 11-24 has biased composition (polar residues); the sequence is NKPNDSNDSNQLHH. The helical transmembrane segment at 47–67 threads the bilayer; sequence LLIPILIIIGIIIGVMYALSL.

It belongs to the glycosyltransferase 51 family.

It is found in the cell membrane. The catalysed reaction is [GlcNAc-(1-&gt;4)-Mur2Ac(oyl-L-Ala-gamma-D-Glu-L-Lys-D-Ala-D-Ala)](n)-di-trans,octa-cis-undecaprenyl diphosphate + beta-D-GlcNAc-(1-&gt;4)-Mur2Ac(oyl-L-Ala-gamma-D-Glu-L-Lys-D-Ala-D-Ala)-di-trans,octa-cis-undecaprenyl diphosphate = [GlcNAc-(1-&gt;4)-Mur2Ac(oyl-L-Ala-gamma-D-Glu-L-Lys-D-Ala-D-Ala)](n+1)-di-trans,octa-cis-undecaprenyl diphosphate + di-trans,octa-cis-undecaprenyl diphosphate + H(+). It participates in cell wall biogenesis; peptidoglycan biosynthesis. Its function is as follows. Peptidoglycan polymerase that catalyzes glycan chain elongation using lipid-linked disaccharide-pentapeptide as the substrate. In Staphylococcus saprophyticus subsp. saprophyticus (strain ATCC 15305 / DSM 20229 / NCIMB 8711 / NCTC 7292 / S-41), this protein is Monofunctional glycosyltransferase.